We begin with the raw amino-acid sequence, 227 residues long: Large ribosomal subunit protein uL3 (227 aa).

N5-methylglutamine is present on Gln154.

It belongs to the universal ribosomal protein uL3 family. In terms of assembly, part of the 50S ribosomal subunit. Forms a cluster with proteins L14 and L19. Post-translationally, methylated by PrmB.

In terms of biological role, one of the primary rRNA binding proteins, it binds directly near the 3'-end of the 23S rRNA, where it nucleates assembly of the 50S subunit. This is Large ribosomal subunit protein uL3 from Acidiphilium cryptum (strain JF-5).